We begin with the raw amino-acid sequence, 868 residues long: Transcription factor pynR (868 aa).

Positions C11–C37 form a DNA-binding region, zn(2)-C6 fungal-type. 4 disordered regions span residues N51 to V88, L662 to S683, S715 to L761, and G829 to N868. 2 stretches are compositionally biased toward low complexity: residues S663–S683 and S715–H727.

The protein localises to the nucleus. Transcription factor that regulates the expression of the gene cluster that mediates the biosynthesis of pyranonigrins, a family of antioxidative compounds. In Aspergillus niger (strain ATCC MYA-4892 / CBS 513.88 / FGSC A1513), this protein is Transcription factor pynR.